A 125-amino-acid chain; its full sequence is Photosystem II extrinsic protein U (125 aa).

An N-terminal signal peptide occupies residues M1–A29.

It belongs to the PsbU family. As to quaternary structure, PSII is composed of 1 copy each of membrane proteins PsbA, PsbB, PsbC, PsbD, PsbE, PsbF, PsbH, PsbI, PsbJ, PsbK, PsbL, PsbM, PsbT, PsbX, PsbY, PsbZ, Psb30/Ycf12, peripheral proteins PsbO, CyanoQ (PsbQ), PsbU, PsbV and a large number of cofactors. It forms dimeric complexes.

It is found in the cellular thylakoid membrane. One of the extrinsic, lumenal subunits of photosystem II (PSII). PSII is a light-driven water plastoquinone oxidoreductase, using light energy to abstract electrons from H(2)O, generating a proton gradient subsequently used for ATP formation. The extrinsic proteins stabilize the structure of photosystem II oxygen-evolving complex (OEC), the ion environment of oxygen evolution and protect the OEC against heat-induced inactivation. This chain is Photosystem II extrinsic protein U, found in Synechococcus sp. (strain CC9311).